A 95-amino-acid chain; its full sequence is Large ribosomal subunit protein bL25 (95 aa).

The protein belongs to the bacterial ribosomal protein bL25 family. As to quaternary structure, part of the 50S ribosomal subunit; part of the 5S rRNA/L5/L18/L25 subcomplex. Contacts the 5S rRNA. Binds to the 5S rRNA independently of L5 and L18.

This is one of the proteins that binds to the 5S RNA in the ribosome where it forms part of the central protuberance. In Shewanella piezotolerans (strain WP3 / JCM 13877), this protein is Large ribosomal subunit protein bL25.